The sequence spans 634 residues: MYDLLKTIDDPADLRRLDRRQLQPLADELRAFVLDSVSKTGGHLSSNLGTVELTIALHYVFNTPNDRIVWDVGHQTYPHKILTGRRDQMHSLRQYDGISGFPRRSESEYDTFGTAHSSTSISAALGMAIGSQLNGDDRFSIAVIGDGAMTAGMAFEAMNNAGVSEDAKLLVILNDNDMSISPPVGALNRHLARLMSGRFYAAARAGVERVLSVAPPVLELARKLEEHAKGMVVPATLFEEFGFNYIGPIDGHDLDSLIPTLQNIRELRGPQFLHVVTKKGQGYKLAEADPVLYHGPGKFNPAEGIKPSTTPAKKTYTQVFGEWLCDEAERDTRVVGITPAMREGSGMVEFEKRFKDRYYDVGIAEQHAVTFAGGLATEGLKPVVAIYSTFLQRAYDQLIHDVALQNLPVVFAIDRAGLVGADGATHAGAYDLAFMRCIPNMTIMAASDENECRQMLHTALQQPNPTAVRYPRGAGTGVATVKEFTEIPLGKGEVRRRTSQPEGKRVAILAFGTMVAPSLAAAEELDATVANMRFVKPVDAALVRELAETHDYLVTVEEGCVMGGAGSACVEALMESGVIRPVLQLGLPDQFVDHGDHAKLLAQCGLDGAGIAKSIRERFLSPAADVAGHAKRVA.

Residues His-74 and 115–117 (AHS) each bind thiamine diphosphate. Asp-146 is a binding site for Mg(2+). Residues 147-148 (GA), Asn-176, Tyr-283, and Glu-365 contribute to the thiamine diphosphate site. Asn-176 is a Mg(2+) binding site.

The protein belongs to the transketolase family. DXPS subfamily. Homodimer. The cofactor is Mg(2+). It depends on thiamine diphosphate as a cofactor.

The catalysed reaction is D-glyceraldehyde 3-phosphate + pyruvate + H(+) = 1-deoxy-D-xylulose 5-phosphate + CO2. It participates in metabolic intermediate biosynthesis; 1-deoxy-D-xylulose 5-phosphate biosynthesis; 1-deoxy-D-xylulose 5-phosphate from D-glyceraldehyde 3-phosphate and pyruvate: step 1/1. Its function is as follows. Catalyzes the acyloin condensation reaction between C atoms 2 and 3 of pyruvate and glyceraldehyde 3-phosphate to yield 1-deoxy-D-xylulose-5-phosphate (DXP). This Burkholderia orbicola (strain MC0-3) protein is 1-deoxy-D-xylulose-5-phosphate synthase.